The sequence spans 460 residues: tRNA (guanine(10)-N(2))-methyltransferase TRMT11 (460 aa).

N-acetylalanine is present on alanine 2.

This sequence belongs to the class I-like SAM-binding methyltransferase superfamily. TRM11 methyltransferase family. Part of the heterodimeric TRMT11-TRM112 methyltransferase complex; this complex forms an active tRNA methyltransferase, where TRMT112 acts as an activator of the catalytic subunit TRMT11.

The protein localises to the cytoplasm. The catalysed reaction is guanosine(10) in tRNA + S-adenosyl-L-methionine = N(2)-methylguanosine(10) in tRNA + S-adenosyl-L-homocysteine + H(+). In terms of biological role, catalytic subunit of the TRMT11-TRM112 methyltransferase complex, that specifically mediates the S-adenosyl-L-methionine-dependent N(2)-methylation of guanosine nucleotide at position 10 (m2G10) in tRNAs. This is one of the major tRNA (guanine-N(2))-methyltransferases. The sequence is that of tRNA (guanine(10)-N(2))-methyltransferase TRMT11 from Bos taurus (Bovine).